Consider the following 328-residue polypeptide: tRNA uridine(34) hydroxylase (328 aa).

In terms of domain architecture, Rhodanese spans 130-224 (LDEDTVVLDT…YGKDPEVQGE (95 aa)). Catalysis depends on Cys-184, which acts as the Cysteine persulfide intermediate.

The protein belongs to the TrhO family.

It carries out the reaction uridine(34) in tRNA + AH2 + O2 = 5-hydroxyuridine(34) in tRNA + A + H2O. In terms of biological role, catalyzes oxygen-dependent 5-hydroxyuridine (ho5U) modification at position 34 in tRNAs. The sequence is that of tRNA uridine(34) hydroxylase from Streptococcus pyogenes serotype M6 (strain ATCC BAA-946 / MGAS10394).